A 451-amino-acid chain; its full sequence is MKQDKMAEVQSHACNQKARVYLETYGCQMNFSDTEIISSILSDAGYAIAESEQVADIIFLNTCAVRENAEQRIRNRLQNLRPLKKQNPKLIVGVLGCMAERLREKLFQEEKIVDLIAGPDAYRTLPNLLDLAESGEKAANVMLSLEETYADINPLRKNGHSAFLAIMRGCDNMCAFCIVPYTRGRERSRPMTSILDELKQLSDEGTREVTLLGQNVNSYYDENSGTRFANLMDKASLVNPNMRIRFTTSHPKDISSELIDVIAERKNLCEFIHLPVQSGSSRMLELMNRGHTREDYLEKIALIKSKIPNCSISTDMISGFCTETEADHAATLSLLREVRYDYAFTFVYSVRPNTPAATRLNDDVPDDVKQRRLSEVIALQQKISAELYRNDIGNTHEVLIEGESKRSSDMWMGRARNNRVVVFPKNGAQVGDFVNVKITDATSATLIGNAL.

An MTTase N-terminal domain is found at 18–134 (ARVYLETYGC…LPNLLDLAES (117 aa)). [4Fe-4S] cluster-binding residues include Cys-27, Cys-63, Cys-97, Cys-170, Cys-174, and Cys-177. Residues 156 to 386 (RKNGHSAFLA…IALQQKISAE (231 aa)) enclose the Radical SAM core domain. Positions 389–451 (RNDIGNTHEV…TSATLIGNAL (63 aa)) constitute a TRAM domain.

It belongs to the methylthiotransferase family. MiaB subfamily. In terms of assembly, monomer. Requires [4Fe-4S] cluster as cofactor.

It is found in the cytoplasm. The enzyme catalyses N(6)-dimethylallyladenosine(37) in tRNA + (sulfur carrier)-SH + AH2 + 2 S-adenosyl-L-methionine = 2-methylsulfanyl-N(6)-dimethylallyladenosine(37) in tRNA + (sulfur carrier)-H + 5'-deoxyadenosine + L-methionine + A + S-adenosyl-L-homocysteine + 2 H(+). Catalyzes the methylthiolation of N6-(dimethylallyl)adenosine (i(6)A), leading to the formation of 2-methylthio-N6-(dimethylallyl)adenosine (ms(2)i(6)A) at position 37 in tRNAs that read codons beginning with uridine. This Chloroherpeton thalassium (strain ATCC 35110 / GB-78) protein is tRNA-2-methylthio-N(6)-dimethylallyladenosine synthase.